The sequence spans 1036 residues: Cellulose synthase-like protein D1 (1036 aa).

The disordered stretch occupies residues Met1–Asn99. Composition is skewed to polar residues over residues Thr9–Arg19 and Asn69–Glu80. The segment covering Asn86–Pro95 has biased composition (gly residues). A run of 2 helical transmembrane segments spans residues Ile178–Trp198 and Ala208–Leu228. Asp308 is an active-site residue. The tract at residues Ala626 to Asn665 is disordered. Residues Thr631–Ser642 are compositionally biased toward low complexity. Asp741 is a catalytic residue. 6 helical membrane-spanning segments follow: residues Ile817 to Phe837, Ile848 to Glu868, Leu895 to Leu915, Gly938 to Ala958, Ile962 to Val982, and Thr1002 to Ile1022.

The protein belongs to the glycosyltransferase 2 family. Plant cellulose synthase-like D subfamily.

The protein localises to the golgi apparatus membrane. Functionally, thought to be a Golgi-localized beta-glycan synthase that polymerize the backbones of noncellulosic polysaccharides (hemicelluloses) of plant cell wall. In Arabidopsis thaliana (Mouse-ear cress), this protein is Cellulose synthase-like protein D1 (CSLD1).